A 505-amino-acid polypeptide reads, in one-letter code: MSVKLKADEISSIIKERIENYNLSVDIEETGKVISVADGVANVYGLKNVMAGEMVEFETGEKGMALNLEESSVGIVVLGKSSSIKEGSSVKRLGKLLRVPVGDALIGRVVNALGEPIDAKGAIEATETRFIEEKAKGIMARKSVHEPLQTGIKAIDGLVPIGRGQRELIIGDRQTGKTTVAIDTIINQKGQDVICIYVAIGQKQSTVAQVVKKLEEYGAMDYTIVVNASASDAPALQYLAPYAGVTMGEYFRDNSRHALIIYDDLSKHAVAYREMSLILRRPPGREAYPGDVFYLHSRLLERASKLSDKLGAGSLTALPIIETQAGDVSAYIPTNVISITDGQIFLESDLFNSGIRPAINVGLSVSRVGGSAQIKAIKKVSGTLRLDLAQYRELQAFAQFASDLDESSRKQLERGQRMVEVLKQPPYSPLPVENQVIIIYAGSQGYLDDIPVSAVTKFEAELYPYIEAKYPEIFEQIRNKKALDKDIEEALSKALNEFKATFSAE.

Residue 171 to 178 (GDRQTGKT) coordinates ATP.

The protein belongs to the ATPase alpha/beta chains family. F-type ATPases have 2 components, CF(1) - the catalytic core - and CF(0) - the membrane proton channel. CF(1) has five subunits: alpha(3), beta(3), gamma(1), delta(1), epsilon(1). CF(0) has three main subunits: a(1), b(2) and c(9-12). The alpha and beta chains form an alternating ring which encloses part of the gamma chain. CF(1) is attached to CF(0) by a central stalk formed by the gamma and epsilon chains, while a peripheral stalk is formed by the delta and b chains.

It localises to the cell inner membrane. It catalyses the reaction ATP + H2O + 4 H(+)(in) = ADP + phosphate + 5 H(+)(out). Its function is as follows. Produces ATP from ADP in the presence of a proton gradient across the membrane. The alpha chain is a regulatory subunit. This is ATP synthase subunit alpha from Campylobacter fetus subsp. fetus (strain 82-40).